Consider the following 171-residue polypeptide: Adenine phosphoribosyltransferase (171 aa).

It belongs to the purine/pyrimidine phosphoribosyltransferase family. As to quaternary structure, homodimer.

It is found in the cytoplasm. The enzyme catalyses AMP + diphosphate = 5-phospho-alpha-D-ribose 1-diphosphate + adenine. Its pathway is purine metabolism; AMP biosynthesis via salvage pathway; AMP from adenine: step 1/1. Functionally, catalyzes a salvage reaction resulting in the formation of AMP, that is energically less costly than de novo synthesis. The polypeptide is Adenine phosphoribosyltransferase (Halalkalibacterium halodurans (strain ATCC BAA-125 / DSM 18197 / FERM 7344 / JCM 9153 / C-125) (Bacillus halodurans)).